The sequence spans 265 residues: Type II pantothenate kinase (265 aa).

ATP is bound at residue D6–K13. E70 (proton acceptor) is an active-site residue. Residues T99, G121–Q125, Y137, and S225 contribute to the ATP site.

This sequence belongs to the type II pantothenate kinase family. Homodimer.

It localises to the cytoplasm. It catalyses the reaction (R)-pantothenate + ATP = (R)-4'-phosphopantothenate + ADP + H(+). It participates in cofactor biosynthesis; coenzyme A biosynthesis; CoA from (R)-pantothenate: step 1/5. Catalyzes the phosphorylation of pantothenate (Pan), the first step in CoA biosynthesis. This Staphylococcus epidermidis (strain ATCC 12228 / FDA PCI 1200) protein is Type II pantothenate kinase.